A 261-amino-acid polypeptide reads, in one-letter code: UPF0328 protein ECU03_1620 (261 aa).

Belongs to the UPF0328 family.

The polypeptide is UPF0328 protein ECU03_1620 (Encephalitozoon cuniculi (strain GB-M1) (Microsporidian parasite)).